A 283-amino-acid polypeptide reads, in one-letter code: Polyamine aminopropyltransferase (283 aa).

A PABS domain is found at 5-240 (NTWFTEIHQD…GWWTATMACK (236 aa)). Gln-33 contacts S-methyl-5'-thioadenosine. Spermidine is bound by residues His-64 and Asp-88. Residues Asp-108 and 139-140 (DG) each bind S-methyl-5'-thioadenosine. Residue Asp-158 is the Proton acceptor of the active site. 158–161 (DSTD) lines the spermidine pocket. Pro-165 provides a ligand contact to S-methyl-5'-thioadenosine.

It belongs to the spermidine/spermine synthase family. In terms of assembly, homodimer or homotetramer.

The protein localises to the cytoplasm. The enzyme catalyses S-adenosyl 3-(methylsulfanyl)propylamine + putrescine = S-methyl-5'-thioadenosine + spermidine + H(+). It participates in amine and polyamine biosynthesis; spermidine biosynthesis; spermidine from putrescine: step 1/1. Its function is as follows. Catalyzes the irreversible transfer of a propylamine group from the amino donor S-adenosylmethioninamine (decarboxy-AdoMet) to putrescine (1,4-diaminobutane) to yield spermidine. This Thioalkalivibrio sulfidiphilus (strain HL-EbGR7) protein is Polyamine aminopropyltransferase.